Consider the following 399-residue polypeptide: L-asparaginase-like protein GE13669 (399 aa).

The signal sequence occupies residues 1-22; it reads MLAQSCCLRLLILLLLFKSTCS. 3 cysteine pairs are disulfide-bonded: cysteine 90–cysteine 95, cysteine 189–cysteine 205, and cysteine 344–cysteine 371.

This sequence belongs to the Ntn-hydrolase family.

The chain is L-asparaginase-like protein GE13669 from Drosophila yakuba (Fruit fly).